Here is a 103-residue protein sequence, read N- to C-terminus: Pyrimidine/purine nucleoside phosphorylase (103 aa).

Belongs to the nucleoside phosphorylase PpnP family.

It catalyses the reaction a purine D-ribonucleoside + phosphate = a purine nucleobase + alpha-D-ribose 1-phosphate. The enzyme catalyses adenosine + phosphate = alpha-D-ribose 1-phosphate + adenine. It carries out the reaction cytidine + phosphate = cytosine + alpha-D-ribose 1-phosphate. The catalysed reaction is guanosine + phosphate = alpha-D-ribose 1-phosphate + guanine. It catalyses the reaction inosine + phosphate = alpha-D-ribose 1-phosphate + hypoxanthine. The enzyme catalyses thymidine + phosphate = 2-deoxy-alpha-D-ribose 1-phosphate + thymine. It carries out the reaction uridine + phosphate = alpha-D-ribose 1-phosphate + uracil. The catalysed reaction is xanthosine + phosphate = alpha-D-ribose 1-phosphate + xanthine. In terms of biological role, catalyzes the phosphorolysis of diverse nucleosides, yielding D-ribose 1-phosphate and the respective free bases. Can use uridine, adenosine, guanosine, cytidine, thymidine, inosine and xanthosine as substrates. Also catalyzes the reverse reactions. The polypeptide is Pyrimidine/purine nucleoside phosphorylase (Methylobacillus flagellatus (strain ATCC 51484 / DSM 6875 / VKM B-1610 / KT)).